The sequence spans 410 residues: Phosphoserine phosphatase (410 aa).

Residues 13 to 91 enclose the ACT domain; that stretch reads LVKIFGKDRP…QAEIISGIGD (79 aa). D187 acts as the Nucleophile in catalysis. D187 and D189 together coordinate Mg(2+). The active-site Proton donor is the D189. Residues E196, R232, 275–276, and K320 each bind substrate; that span reads SG. D343 lines the Mg(2+) pocket. N346 contacts substrate.

This sequence belongs to the HAD-like hydrolase superfamily. SerB family. Requires Mg(2+) as cofactor.

The catalysed reaction is O-phospho-L-serine + H2O = L-serine + phosphate. It carries out the reaction O-phospho-D-serine + H2O = D-serine + phosphate. It participates in amino-acid biosynthesis; L-serine biosynthesis; L-serine from 3-phospho-D-glycerate: step 3/3. Catalyzes the dephosphorylation of phosphoserine (P-Ser) in vitro. Also catalyzes the dephosphorylation of phosphothreonine (P-Thr) in vitro. This chain is Phosphoserine phosphatase, found in Streptomyces coelicolor (strain ATCC BAA-471 / A3(2) / M145).